A 459-amino-acid chain; its full sequence is Mitochondrial distribution and morphology protein 34 (459 aa).

Residues 1–190 (MSFRFNEAVF…LPSLIFNTSQ (190 aa)) enclose the SMP-LTD domain. Positions 338–347 (RSNSNDDNAK) are enriched in basic and acidic residues. Positions 338–375 (RSNSNDDNAKPRRRKIKCKKTRTPSNLQSQGEQAVDDS) are disordered. The segment covering 348 to 359 (PRRRKIKCKKTR) has biased composition (basic residues).

Belongs to the MDM34 family. In terms of assembly, component of the ER-mitochondria encounter structure (ERMES) or MDM complex, composed of MMM1, MDM10, MDM12 and MDM34. Ubiquitinated by a SCF (SKP1-CUL1-F-box protein) E3 ubiquitin-protein ligase complex containing the F-box protein MDM30. Ubiquitination is important for mitochondrial integrity.

The protein localises to the mitochondrion outer membrane. Functionally, component of the ERMES/MDM complex, which serves as a molecular tether to connect the endoplasmic reticulum (ER) and mitochondria. Components of this complex are involved in the control of mitochondrial shape and protein biogenesis, and function in nonvesicular lipid trafficking between the ER and mitochondria. MDM34 is required for the interaction of the ER-resident membrane protein MMM1 and the outer mitochondrial membrane-resident beta-barrel protein MDM10. This chain is Mitochondrial distribution and morphology protein 34, found in Saccharomyces cerevisiae (strain AWRI1631) (Baker's yeast).